The sequence spans 878 residues: MSDVFNSPQARTKISAAFGIKPTAGQDVEELLIPKVWVPPEDPLASPSRLAKFLRENGYKILQPRSLPENEEYETDQILPDLAWMRQIEGAVLKPTLSLHWGPRVLPKVLLNSPPEQGKAQCVPTRHCTTQADIYLFLQVPEATESLKDEVTLLTQNIRDKAYGSGTYMGQATRLVAMKEVATGRNPNKDPLKLGYTFESIAQLLDITLPVGPPGEDDKPWVPLTRVPSRMLVLTGDVDGDFEVEDYLPKINLKSSSGLPYVGRTKGETIGEMIAISNQFLRELSALLKQGAGTKGSNKKKLLSMLSDYWYLSCGLLFPKAERYDKSTWLTKTRNIWSAPSPTHLMISMITWPVMSNSPNNVLNIEGCPSLYKFNPFRGGLNRIVEWILAPEEPKALVYADNIYIVHSNTWYSIDLEKGEANCTRQHMQAAMYYILTRGWSDNGDPMFNQTWASFAMNIAPALVVDSSCLIMNLQIKSYGQGSGNAATFINNHLLSTLVLDQWNLMKQPNPDSEEFKSIEDKLGINFKIERSIDDIRGKLRQLVPLAQPGYLSGGVEPEQSSPTVELDLLGWSATYSKDLGIYVPVLDKERLFCSAAYPKGVENKSLKSKVGIEQAYKVVRYEALRLVGGWNYPLLNKACKNNASAARRHLEAKGFPLDEFLAEWSELSEFGETFEGFNIKLTVTRENLAELNKPVPPKPPNVNRPVNTGGLKAVSNALKTGRYRNEAGLSGLVLLATARSRLQDAVKAKAEAEKLHKSKPDDPDADWFERSETLSDLLEKADVASKVAHSALVETSDALEAVQSSSVYTPKYPEVKNPQTASNPVVGLHLPAKRATGVQAALLGAGTSRPMGMEAPTRSKNAVKMAKRAQRQKESRQ.

A GTP-binding site is contributed by 258-265 (GLPYVGRT). The RdRp catalytic domain occupies 397-597 (LVYADNIYIV…DKERLFCSAA (201 aa)). The interval 845–878 (GAGTSRPMGMEAPTRSKNAVKMAKRAQRQKESRQ) is disordered.

In terms of assembly, interacts with VP3 in the cytoplasm. In terms of processing, may exist in multiple phosphorylated forms.

It localises to the virion. The catalysed reaction is RNA(n) + a ribonucleoside 5'-triphosphate = RNA(n+1) + diphosphate. RNA-dependent RNA polymerase which is found both free and covalently attached to the genomic RNA. May also contain guanylyl and methyl transferase activities. This is RNA-directed RNA polymerase (VP1) from Gallus gallus (Chicken).